The chain runs to 459 residues: V-type ATP synthase beta chain (459 aa).

This sequence belongs to the ATPase alpha/beta chains family.

Its function is as follows. Produces ATP from ADP in the presence of a proton gradient across the membrane. The V-type beta chain is a regulatory subunit. The sequence is that of V-type ATP synthase beta chain from Thermoanaerobacter pseudethanolicus (strain ATCC 33223 / 39E) (Clostridium thermohydrosulfuricum).